The chain runs to 362 residues: MVKLFIGNLPREATEQEIRSLFEQYGKVLECDIIKNYGFVHIEDKTAAEDAIRNLHHYKLHGVNINVEASKNKSKTSTKLHVGNISPTCTNKELRAKFEEYGPVIECDIVKDYAFVHMERAEDAVEAIRGLDNTEFQGKRMHVQLSTSRLRTAPGMGDQSGCYRCGKEGHWSKECPVDRSGRVADFTEQYNEQYGAVRTPYTMGYGDSLYYNNAYGALDAYYKRCRAARSYEAVAAAAASAYNYAEQTLSQLPQVQNTAMASHLTSTSLDPYDRHLLPTSGAAAAAAAAAAAAVTAASSSYYGRDRSPLRRATGPVPTVGEGYGYGHESELSQGSSAARNSLYDMARYEREQYADRARYSAF.

2 consecutive RRM domains span residues 2–72 and 78–148; these read VKLF…ASKN and TKLH…LSTS. A Glycyl lysine isopeptide (Lys-Gly) (interchain with G-Cter in SUMO2) cross-link involves residue Lys79. Ser86 is subject to Phosphoserine. Lys92 participates in a covalent cross-link: Glycyl lysine isopeptide (Lys-Gly) (interchain with G-Cter in SUMO2). The CCHC-type zinc-finger motif lies at 160–177; the sequence is SGCYRCGKEGHWSKECPV. Residues 196 to 362 are interaction with TNPO3; the sequence is AVRTPYTMGY…YADRARYSAF (167 aa). Residues 306–336 are disordered; sequence RSPLRRATGPVPTVGEGYGYGHESELSQGSS. Ser307 is subject to Phosphoserine.

In terms of assembly, interacts with TNPO3; the interaction mediates nuclear import of the protein and is disrupted by nuclear Ran bound to GTP. Interacts with EIF4G1 and WT1. Interacts with EIF4A1; the interaction is modulated under stress-induced conditions. Interacts with AGO1. Interacts with AGO2; the interaction occurs under both cell proliferation and differentiation conditions and in an RNA- and phosphorylation-independent manner. Interacts with DDX5; the interaction occurs in an RNA-independent manner. Interacts with RBPMS; the interaction allows cooperative assembly of RNA-bound stable cell-specific alternative splicing regulatory complexes. Phosphorylated. Phosphorylated in vitro on Ser-307 by SRPK1. Phosphorylation on Ser-307 is induced upon cell stress signaling, which alters its subcellular localization and may modulate its activity on IRES-mediated mRNA translation. Phosphorylation on Ser-307 is induced upon cell muscle differentiation.

It localises to the nucleus. The protein localises to the nucleolus. Its subcellular location is the nucleus speckle. It is found in the cytoplasm. The protein resides in the cytoplasmic granule. Its function is as follows. RNA-binding factor involved in multiple aspects of cellular processes like alternative splicing of pre-mRNA and translation regulation. Modulates alternative 5'-splice site and exon selection. Acts as a muscle cell differentiation-promoting factor. Activates exon skipping of the PTB pre-mRNA during muscle cell differentiation. Antagonizes the activity of the splicing factor PTBP1 to modulate muscle cell-specific exon selection of alpha tropomyosin. Binds to intronic pyrimidine-rich sequence of the TPM1 and MAPT pre-mRNAs. Required for the translational activation of PER1 mRNA in response to circadian clock. Binds directly to the 3'-UTR of the PER1 mRNA. Exerts a suppressive activity on Cap-dependent translation via binding to CU-rich responsive elements within the 3'UTR of mRNAs, a process increased under stress conditions or during myocytes differentiation. Recruits EIF4A1 to stimulate IRES-dependent translation initiation in respons to cellular stress. Associates to internal ribosome entry segment (IRES) in target mRNA species under stress conditions. Plays a role for miRNA-guided RNA cleavage and translation suppression by promoting association of AGO2-containing miRNPs with their cognate target mRNAs. Associates with miRNAs during muscle cell differentiation. Binds preferentially to 5'-CGCGCG[GCA]-3' motif in vitro. This chain is RNA-binding protein 4 (RBM4), found in Bos taurus (Bovine).